The primary structure comprises 321 residues: Phospho-N-acetylmuramoyl-pentapeptide-transferase (321 aa).

The next 10 membrane-spanning stretches (helical) occupy residues 4–24, 51–71, 75–95, 109–129, 139–159, 173–193, 195–215, 222–242, 247–267, and 297–317; these read MVWA…WLIP, TMGG…TVGF, SGVL…DDYI, QKFT…VYGI, GFEV…LLIV, GLAA…ASAG, SDVT…FLFF, MFMG…LALL, LILP…ILQV, and VVYT…LLAM.

Belongs to the glycosyltransferase 4 family. MraY subfamily. Mg(2+) is required as a cofactor.

The protein resides in the cell membrane. The catalysed reaction is UDP-N-acetyl-alpha-D-muramoyl-L-alanyl-gamma-D-glutamyl-meso-2,6-diaminopimeloyl-D-alanyl-D-alanine + di-trans,octa-cis-undecaprenyl phosphate = di-trans,octa-cis-undecaprenyl diphospho-N-acetyl-alpha-D-muramoyl-L-alanyl-D-glutamyl-meso-2,6-diaminopimeloyl-D-alanyl-D-alanine + UMP. It participates in cell wall biogenesis; peptidoglycan biosynthesis. Catalyzes the initial step of the lipid cycle reactions in the biosynthesis of the cell wall peptidoglycan: transfers peptidoglycan precursor phospho-MurNAc-pentapeptide from UDP-MurNAc-pentapeptide onto the lipid carrier undecaprenyl phosphate, yielding undecaprenyl-pyrophosphoryl-MurNAc-pentapeptide, known as lipid I. This Heliobacterium modesticaldum (strain ATCC 51547 / Ice1) protein is Phospho-N-acetylmuramoyl-pentapeptide-transferase.